A 426-amino-acid chain; its full sequence is Histidine--tRNA ligase (426 aa).

Belongs to the class-II aminoacyl-tRNA synthetase family. In terms of assembly, homodimer.

It localises to the cytoplasm. It catalyses the reaction tRNA(His) + L-histidine + ATP = L-histidyl-tRNA(His) + AMP + diphosphate + H(+). This Legionella pneumophila (strain Lens) protein is Histidine--tRNA ligase.